The sequence spans 55 residues: Ferredoxin (55 aa).

4Fe-4S ferredoxin-type domains are found at residues 2–27 (HIIT…HEGT) and 28–55 (GKYE…VKAE). Positions 8, 11, 14, 18, 37, 40, 43, and 47 each coordinate [4Fe-4S] cluster.

The cofactor is [4Fe-4S] cluster.

Ferredoxins are iron-sulfur proteins that transfer electrons in a wide variety of metabolic reactions. This Thermoanaerobacterium thermosaccharolyticum (Clostridium thermosaccharolyticum) protein is Ferredoxin.